An 84-amino-acid polypeptide reads, in one-letter code: Beta-defensin 119 (84 aa).

A signal peptide spans 1–21; it reads MKLLYLFLAILLAIEEPVISG. 2 cysteine pairs are disulfide-bonded: Cys-35-Cys-49 and Cys-39-Cys-56.

It belongs to the beta-defensin family.

The protein resides in the secreted. Functionally, has antibacterial activity. The polypeptide is Beta-defensin 119 (DEFB119) (Pan troglodytes (Chimpanzee)).